A 199-amino-acid chain; its full sequence is Superoxide dismutase [Fe] (199 aa).

Fe cation contacts are provided by His-27, His-74, Asp-158, and His-162.

The protein belongs to the iron/manganese superoxide dismutase family. As to quaternary structure, homodimer. Fe cation serves as cofactor.

The enzyme catalyses 2 superoxide + 2 H(+) = H2O2 + O2. Destroys superoxide anion radicals which are normally produced within the cells and which are toxic to biological systems. In Babesia bovis, this protein is Superoxide dismutase [Fe] (SODB).